Consider the following 370-residue polypeptide: sn-glycerol-3-phosphate import ATP-binding protein UgpC (370 aa).

An ABC transporter domain is found at 4 to 235; that stretch reads LRLDGIRKRY…PATRFVASFL (232 aa). Position 37-44 (37-44) interacts with ATP; sequence GPSGCGKS.

Belongs to the ABC transporter superfamily. sn-glycerol-3-phosphate importer (TC 3.A.1.1.3) family. In terms of assembly, the complex is composed of two ATP-binding proteins (UgpC), two transmembrane proteins (UgpA and UgpE) and a solute-binding protein (UgpB).

The protein localises to the cell inner membrane. It catalyses the reaction sn-glycerol 3-phosphate(out) + ATP + H2O = sn-glycerol 3-phosphate(in) + ADP + phosphate + H(+). Its function is as follows. Part of the ABC transporter complex UgpBAEC involved in sn-glycerol-3-phosphate (G3P) import. Responsible for energy coupling to the transport system. The protein is sn-glycerol-3-phosphate import ATP-binding protein UgpC of Chromohalobacter salexigens (strain ATCC BAA-138 / DSM 3043 / CIP 106854 / NCIMB 13768 / 1H11).